The primary structure comprises 966 residues: RNA polymerase-associated protein RapA (966 aa).

The Helicase ATP-binding domain maps to 163–337 (EVGQRLHPRV…FARLKLLDAD (175 aa)). 176-183 (DEVGLGKT) is an ATP binding site. A DEAH box motif is present at residues 283-286 (DEAH). Residues 488–642 (RVEWLITFLK…ICPMGMALFE (155 aa)) form the Helicase C-terminal domain.

It belongs to the SNF2/RAD54 helicase family. RapA subfamily. Interacts with the RNAP. Has a higher affinity for the core RNAP than for the holoenzyme. Its ATPase activity is stimulated by binding to RNAP.

Transcription regulator that activates transcription by stimulating RNA polymerase (RNAP) recycling in case of stress conditions such as supercoiled DNA or high salt concentrations. Probably acts by releasing the RNAP, when it is trapped or immobilized on tightly supercoiled DNA. Does not activate transcription on linear DNA. Probably not involved in DNA repair. In Actinobacillus succinogenes (strain ATCC 55618 / DSM 22257 / CCUG 43843 / 130Z), this protein is RNA polymerase-associated protein RapA.